Reading from the N-terminus, the 206-residue chain is Venom allergen 5 (206 aa).

Intrachain disulfides connect Cys-5/Cys-18, Cys-9/Cys-103, Cys-28/Cys-96, and Cys-172/Cys-189. An SCP domain is found at 47–191 (LKVHNDFRQK…WYTHYLVCNY (145 aa)).

This sequence belongs to the CRISP family. Venom allergen 5-like subfamily. Expressed by the venom gland.

It localises to the secreted. The polypeptide is Venom allergen 5 (Vespula vidua (Ground hornet)).